An 83-amino-acid chain; its full sequence is Defensin-like protein 47 (83 aa).

The signal sequence occupies residues 1 to 27 (MGSTKTLVTCFLVIILAVSLPNNNVLA). 4 cysteine pairs are disulfide-bonded: Cys-40-Cys-81, Cys-44-Cys-68, Cys-53-Cys-79, and Cys-57-Cys-80.

It belongs to the DEFL family.

Its subcellular location is the secreted. The polypeptide is Defensin-like protein 47 (Arabidopsis thaliana (Mouse-ear cress)).